The sequence spans 520 residues: Maturase K (520 aa).

The protein belongs to the intron maturase 2 family. MatK subfamily.

Its subcellular location is the plastid. The protein localises to the chloroplast. Its function is as follows. Usually encoded in the trnK tRNA gene intron. Probably assists in splicing its own and other chloroplast group II introns. In Aspidistra elatior (Cast-iron plant), this protein is Maturase K.